The following is a 195-amino-acid chain: Putative L(+)-tartrate dehydratase subunit beta (195 aa).

Histidine 36 is a catalytic residue. Residue lysine 104 coordinates substrate.

It belongs to the class-I fumarase family. As to quaternary structure, heterotetramer of two alpha and two beta subunits.

It catalyses the reaction (2R,3R)-tartrate = oxaloacetate + H2O. This chain is Putative L(+)-tartrate dehydratase subunit beta, found in Methanocaldococcus jannaschii (strain ATCC 43067 / DSM 2661 / JAL-1 / JCM 10045 / NBRC 100440) (Methanococcus jannaschii).